A 182-amino-acid chain; its full sequence is Unknown protein 1 (182 aa).

This is Unknown protein 1 from Helianthus annuus (Common sunflower).